The chain runs to 20 residues: Antifungal protein J (20 aa).

It localises to the vacuole. Its function is as follows. Inhibitor of serine proteases chymotrypsin, pepsin and trypsin. Has strong antifungal activity against the human pathogenic fungi C.albicans TIMM 1768, S.cerevisiae KCTC 7296 and T.beigelli KCTC 7707, but lacks antifungal activity against the plant pathogenic fungi C.gloeosporioides KACC 40003, C.coccodes KACC 40803 and D.bryoniae KACC 40669. Lacks hemolytic activity against human erythrocytes. This chain is Antifungal protein J, found in Solanum tuberosum (Potato).